The chain runs to 269 residues: Octanoyltransferase LipM (269 aa).

The 209-residue stretch at 31-239 (NHGAPVLRFY…GFSEGFEVNF (209 aa)) folds into the BPL/LPL catalytic domain. The Acyl-thioester intermediate role is filled by C141.

It belongs to the octanoyltransferase LipM family. As to quaternary structure, monomer.

It catalyses the reaction octanoyl-[ACP] + L-lysyl-[protein] = N(6)-octanoyl-L-lysyl-[protein] + holo-[ACP] + H(+). It participates in protein modification; protein lipoylation via endogenous pathway; protein N(6)-(lipoyl)lysine from octanoyl-[acyl-carrier-protein]. Its function is as follows. Catalyzes the transfer of endogenously produced octanoic acid from octanoyl-acyl-carrier-protein onto the lipoyl domain of GcvH, an intermediate carrier during protein lipoylation. The protein is Octanoyltransferase LipM of Carboxydothermus hydrogenoformans (strain ATCC BAA-161 / DSM 6008 / Z-2901).